The sequence spans 201 residues: Cytochrome c4 (201 aa).

The N-terminal stretch at methionine 1–alanine 20 is a signal peptide. Residues cysteine 34, cysteine 37, histidine 38, methionine 77, cysteine 130, cysteine 133, histidine 134, and methionine 178 each coordinate heme c.

In terms of processing, binds 2 heme c groups covalently per subunit.

The protein resides in the periplasm. In terms of biological role, diheme, high potential cytochrome c believed to be an intermediate electron donor to terminal oxidation systems. This is Cytochrome c4 (cc4) from Pseudomonas aeruginosa (strain ATCC 15692 / DSM 22644 / CIP 104116 / JCM 14847 / LMG 12228 / 1C / PRS 101 / PAO1).